Reading from the N-terminus, the 108-residue chain is uncharacterized protein (108 aa).

This is an uncharacterized protein from Acanthamoeba polyphaga mimivirus (APMV).